A 554-amino-acid polypeptide reads, in one-letter code: Dihydroxy-acid dehydratase (554 aa).

Residue Asp-78 coordinates Mg(2+). Cys-119 contacts [2Fe-2S] cluster. Mg(2+) contacts are provided by Asp-120 and Lys-121. At Lys-121 the chain carries N6-carboxylysine. Position 191 (Cys-191) interacts with [2Fe-2S] cluster. Glu-444 contributes to the Mg(2+) binding site. The Proton acceptor role is filled by Ser-470.

This sequence belongs to the IlvD/Edd family. In terms of assembly, homodimer. Requires [2Fe-2S] cluster as cofactor. Mg(2+) is required as a cofactor.

The catalysed reaction is (2R)-2,3-dihydroxy-3-methylbutanoate = 3-methyl-2-oxobutanoate + H2O. It catalyses the reaction (2R,3R)-2,3-dihydroxy-3-methylpentanoate = (S)-3-methyl-2-oxopentanoate + H2O. The protein operates within amino-acid biosynthesis; L-isoleucine biosynthesis; L-isoleucine from 2-oxobutanoate: step 3/4. It functions in the pathway amino-acid biosynthesis; L-valine biosynthesis; L-valine from pyruvate: step 3/4. In terms of biological role, functions in the biosynthesis of branched-chain amino acids. Catalyzes the dehydration of (2R,3R)-2,3-dihydroxy-3-methylpentanoate (2,3-dihydroxy-3-methylvalerate) into 2-oxo-3-methylpentanoate (2-oxo-3-methylvalerate) and of (2R)-2,3-dihydroxy-3-methylbutanoate (2,3-dihydroxyisovalerate) into 2-oxo-3-methylbutanoate (2-oxoisovalerate), the penultimate precursor to L-isoleucine and L-valine, respectively. The chain is Dihydroxy-acid dehydratase from Nitratidesulfovibrio vulgaris (strain DP4) (Desulfovibrio vulgaris).